The chain runs to 556 residues: Delta-1-pyrroline-5-carboxylate dehydrogenase, mitochondrial (556 aa).

The N-terminal 17 residues, 1-17 (MLRARSAVSQSWKGFKT), are a transit peptide targeting the mitochondrion. NAD(+) contacts are provided by residues Lys226 and 279-283 (GSVPT). Glu307 (proton acceptor) is an active-site residue. The active-site Nucleophile is Cys341. Glu440 contacts NAD(+). Ser506 is a substrate binding site.

Belongs to the aldehyde dehydrogenase family.

The protein localises to the mitochondrion matrix. The catalysed reaction is L-glutamate 5-semialdehyde + NAD(+) + H2O = L-glutamate + NADH + 2 H(+). Its pathway is amino-acid degradation; L-proline degradation into L-glutamate; L-glutamate from L-proline: step 2/2. Functionally, irreversible conversion of delta-1-pyrroline-5-carboxylate (P5C), derived either from proline or ornithine, to glutamate. This is a necessary step in the pathway interconnecting the urea and tricarboxylic acid cycles. The chain is Delta-1-pyrroline-5-carboxylate dehydrogenase, mitochondrial (aldh4a1) from Danio rerio (Zebrafish).